The sequence spans 276 residues: N-acetylmuramoyl-L-alanine amidase AmiD (276 aa).

Positions 1–16 are cleaved as a signal peptide; sequence MRRFFWLVAAALLLAG. Cys17 carries the N-palmitoyl cysteine lipid modification. Residue Cys17 is the site of S-diacylglycerol cysteine attachment. The region spanning 42-179 is the N-acetylmuramoyl-L-alanine amidase domain; sequence PRIKVLVIHY…APQRKDDPGP (138 aa). His50 lines the Zn(2+) pocket. Residue 51-52 coordinates substrate; sequence YT. Glu119 acts as the Proton acceptor in catalysis. Zn(2+)-binding residues include His166 and Asp176.

It belongs to the N-acetylmuramoyl-L-alanine amidase 2 family. Requires Zn(2+) as cofactor.

It localises to the cell outer membrane. It catalyses the reaction Hydrolyzes the link between N-acetylmuramoyl residues and L-amino acid residues in certain cell-wall glycopeptides.. The sequence is that of N-acetylmuramoyl-L-alanine amidase AmiD (amiD) from Escherichia coli (strain K12).